Consider the following 152-residue polypeptide: MITLTQRLDHAHPVTASVTLPIDIRVKSRAKVELNDGREAGLMLPRGLLLRGGDLLSTDDGNEIIEVIAAPESVSVVRCADPYLLARACYHLGNRHVPLQIMPGELRYHHDHVLDDMLRQFDLDVTFAHLPFEPEAGAYTSDAHSHSHAHSH.

It belongs to the UreE family.

Its subcellular location is the cytoplasm. Its function is as follows. Involved in urease metallocenter assembly. Binds nickel. Probably functions as a nickel donor during metallocenter assembly. The sequence is that of Urease accessory protein UreE from Enterobacter sp. (strain 638).